The primary structure comprises 226 residues: MKAIRIAIDGPASSGKSTVAKIIAKNLGYTYLDTGAMYRSATYIALKNGYHKEDVNLILQELAERPISFKKAADGSQLVFLGDQDVTMAIRQNDVTNNVSWVSALPEIREELVKQQRRIARTGAIIMDGRDIGTVVLPDAELKIFLIASVEERAQRRYQENIEKGIATDFDTLKTEIAARDYKDSHRQVSPLKAADDAIIFDTTGITISAVVQFIQEKAEKIIDMA.

10-18 (GPASSGKST) is a binding site for ATP.

The protein belongs to the cytidylate kinase family. Type 1 subfamily.

The protein localises to the cytoplasm. It carries out the reaction CMP + ATP = CDP + ADP. The catalysed reaction is dCMP + ATP = dCDP + ADP. The protein is Cytidylate kinase of Streptococcus equi subsp. zooepidemicus (strain MGCS10565).